Consider the following 185-residue polypeptide: MNQSEPGQTRRSVPVDQLINSLCATVPDYPKPGIIFKDLTPVFANGAALRAVVDALVEPFKGQFDAVAGVEARGFLLAAAAAYATDTGVITVRKAGKLPRKVISEDYALEYGTATLELHTADLPAGSRVLILDDVLATGGTLGAAARLFERCGVHVAGVGVVMELGELRGRSALTGHRVRSLLRL.

It belongs to the purine/pyrimidine phosphoribosyltransferase family. In terms of assembly, homodimer.

It localises to the cytoplasm. It catalyses the reaction AMP + diphosphate = 5-phospho-alpha-D-ribose 1-diphosphate + adenine. Its pathway is purine metabolism; AMP biosynthesis via salvage pathway; AMP from adenine: step 1/1. In terms of biological role, catalyzes a salvage reaction resulting in the formation of AMP, that is energically less costly than de novo synthesis. This Arthrobacter sp. (strain FB24) protein is Adenine phosphoribosyltransferase.